The primary structure comprises 139 residues: Large ribosomal subunit protein uL13 (139 aa).

Belongs to the universal ribosomal protein uL13 family. In terms of assembly, part of the 50S ribosomal subunit.

In terms of biological role, this protein is one of the early assembly proteins of the 50S ribosomal subunit, although it is not seen to bind rRNA by itself. It is important during the early stages of 50S assembly. The polypeptide is Large ribosomal subunit protein uL13 (Wolinella succinogenes (strain ATCC 29543 / DSM 1740 / CCUG 13145 / JCM 31913 / LMG 7466 / NCTC 11488 / FDC 602W) (Vibrio succinogenes)).